The sequence spans 160 residues: Keratin-associated protein 13-4 (160 aa).

Tandem repeats lie at residues 41–50, 51–60, 61–70, and 77–86. The segment at 41-86 is 4 X 10 AA approximate repeats; it reads CQLRSSLYRDCQKTCWEPASCQKSCYRPRTSILCCPCQTTCSGSLG.

The protein belongs to the PMG family. As to quaternary structure, interacts with hair keratins.

In terms of biological role, in the hair cortex, hair keratin intermediate filaments are embedded in an interfilamentous matrix, consisting of hair keratin-associated proteins (KRTAP), which are essential for the formation of a rigid and resistant hair shaft through their extensive disulfide bond cross-linking with abundant cysteine residues of hair keratins. The matrix proteins include the high-sulfur and high-glycine-tyrosine keratins. This Homo sapiens (Human) protein is Keratin-associated protein 13-4 (KRTAP13-4).